The following is a 286-amino-acid chain: Mating type protein A-1 (286 aa).

The segment at residues 40 to 95 (AAKKKVNGFMSFRSYYSPLFSQLPQKERSPFMTILWQHDPFHNEWNFMCSVYSSIR) is a DNA-binding region (alpha box).

It belongs to the MATALPHA1 family.

Its subcellular location is the nucleus. Functionally, required for expression of the heterokaryon incompatibility and sexual functions. The protein is Mating type protein A-1 (MTA-1) of Neurospora africana.